A 296-amino-acid polypeptide reads, in one-letter code: Lipoyl synthase (296 aa).

Residues C37, C42, C48, C63, C67, C70, and S276 each contribute to the [4Fe-4S] cluster site. The Radical SAM core domain maps to 49 to 265 (WSKKHTTVMI…ERVAKTKGFL (217 aa)).

It belongs to the radical SAM superfamily. Lipoyl synthase family. The cofactor is [4Fe-4S] cluster.

The protein localises to the cytoplasm. The enzyme catalyses [[Fe-S] cluster scaffold protein carrying a second [4Fe-4S](2+) cluster] + N(6)-octanoyl-L-lysyl-[protein] + 2 oxidized [2Fe-2S]-[ferredoxin] + 2 S-adenosyl-L-methionine + 4 H(+) = [[Fe-S] cluster scaffold protein] + N(6)-[(R)-dihydrolipoyl]-L-lysyl-[protein] + 4 Fe(3+) + 2 hydrogen sulfide + 2 5'-deoxyadenosine + 2 L-methionine + 2 reduced [2Fe-2S]-[ferredoxin]. The protein operates within protein modification; protein lipoylation via endogenous pathway; protein N(6)-(lipoyl)lysine from octanoyl-[acyl-carrier-protein]: step 2/2. Its function is as follows. Catalyzes the radical-mediated insertion of two sulfur atoms into the C-6 and C-8 positions of the octanoyl moiety bound to the lipoyl domains of lipoate-dependent enzymes, thereby converting the octanoylated domains into lipoylated derivatives. The protein is Lipoyl synthase of Rickettsia conorii (strain ATCC VR-613 / Malish 7).